A 124-amino-acid chain; its full sequence is uncharacterized protein (124 aa).

Its subcellular location is the plastid. The protein resides in the chloroplast. This is an uncharacterized protein from Chlamydomonas reinhardtii (Chlamydomonas smithii).